Consider the following 2531-residue polypeptide: Highly reducing polyketide synthase ausV (2531 aa).

The region spanning S7–T432 is the Ketosynthase family 3 (KS3) domain. Active-site for beta-ketoacyl synthase activity residues include C180, H315, and H355. Residues F554 to S882 form a malonyl-CoA:ACP transacylase (MAT) domain region. The active-site For malonyltransferase activity is S644. Residues H939–D1069 are N-terminal hotdog fold. One can recognise a PKS/mFAS DH domain in the interval H939–D1238. Residues D940–S1236 form a dehydratase (DH) domain region. Residue H971 is the Proton acceptor; for dehydratase activity of the active site. Positions Y1087 to D1238 are C-terminal hotdog fold. D1152 acts as the Proton donor; for dehydratase activity in catalysis. The segment at S1414 to S1592 is methyltransferase (CMet) domain. Residues L1832 to R2133 form an enoyl reductase (ER) domain region. Positions H2156–I2331 are ketoreductase (KR) domain. The Carrier domain occupies A2444–S2521. S2481 is modified (O-(pantetheine 4'-phosphoryl)serine).

Its pathway is secondary metabolite biosynthesis; terpenoid biosynthesis. Functionally, highly reducing polyketide synthase; part of the gene cluster that mediates the biosynthesis of calidodehydroaustin, a fungal meroterpenoid. The first step of the pathway is the synthesis of 3,5-dimethylorsellinic acid by the polyketide synthase ausA. 3,5-dimethylorsellinic acid is then prenylated by the polyprenyl transferase ausN. Further epoxidation by the FAD-dependent monooxygenase ausM and cyclization by the probable terpene cyclase ausL lead to the formation of protoaustinoid A. Protoaustinoid A is then oxidized to spiro-lactone preaustinoid A3 by the combined action of the FAD-binding monooxygenases ausB and ausC, and the dioxygenase ausE. Acid-catalyzed keto-rearrangement and ring contraction of the tetraketide portion of preaustinoid A3 by ausJ lead to the formation of preaustinoid A4. The aldo-keto reductase ausK, with the help of ausH, is involved in the next step by transforming preaustinoid A4 into isoaustinone which is in turn hydroxylated by the P450 monooxygenase ausI to form austinolide. The cytochrome P450 monooxygenase ausG modifies austinolide to austinol. Austinol is further acetylated to austin by the O-acetyltransferase ausP, which spontaneously changes to dehydroaustin. The cytochrome P450 monooxygenase ausR then converts dehydroaustin is into 7-dehydrodehydroaustin. The hydroxylation catalyzed by ausR permits the O-acetyltransferase ausQ to add an additional acetyl group to the molecule, leading to the formation of acetoxydehydroaustin. The short chain dehydrogenase ausT catalyzes the reduction of the double bond present between carbon atoms 1 and 2 to convert 7-dehydrodehydroaustin into 1,2-dihydro-7-hydroxydehydroaustin. AusQ catalyzes not only an acetylation reaction but also the addition of the PKS ausV diketide product to 1,2-dihydro-7-hydroxydehydroaustin, forming precalidodehydroaustin. Finally, the iron/alpha-ketoglutarate-dependent dioxygenase converts precalidodehydroaustin into calidodehydroaustin. This Aspergillus calidoustus protein is Highly reducing polyketide synthase ausV.